Here is a 187-residue protein sequence, read N- to C-terminus: Ribosome maturation factor RimM (187 aa).

Residues 1–17 (MTSTPSPSTADPNSTND) show a composition bias toward polar residues. The interval 1 to 21 (MTSTPSPSTADPNSTNDWLPV) is disordered. A PRC barrel domain is found at 111–184 (EGEFHLLDLV…WLLLTPPPGL (74 aa)).

This sequence belongs to the RimM family. Binds ribosomal protein uS19.

It localises to the cytoplasm. Functionally, an accessory protein needed during the final step in the assembly of 30S ribosomal subunit, possibly for assembly of the head region. Essential for efficient processing of 16S rRNA. May be needed both before and after RbfA during the maturation of 16S rRNA. It has affinity for free ribosomal 30S subunits but not for 70S ribosomes. The polypeptide is Ribosome maturation factor RimM (Synechococcus sp. (strain CC9311)).